The sequence spans 254 residues: Attacin-A (254 aa).

Positions 1–18 (MFTYKLILGLVLVVSASA) are cleaved as a signal peptide. A propeptide spanning residues 19–62 (RYLVFEDLEGESYLVPNQAEDEQVLEGEPFYENAVQLASPRVRR) is cleaved from the precursor.

It belongs to the attacin/sarcotoxin-2 family.

The protein localises to the secreted. Its function is as follows. Hemolymph antibacterial protein. The protein is Attacin-A of Trichoplusia ni (Cabbage looper).